Consider the following 466-residue polypeptide: Asparagine--tRNA ligase (466 aa).

This sequence belongs to the class-II aminoacyl-tRNA synthetase family. Homodimer.

It localises to the cytoplasm. The enzyme catalyses tRNA(Asn) + L-asparagine + ATP = L-asparaginyl-tRNA(Asn) + AMP + diphosphate + H(+). This Buchnera aphidicola subsp. Schizaphis graminum (strain Sg) protein is Asparagine--tRNA ligase.